Here is a 736-residue protein sequence, read N- to C-terminus: Protein kinase C epsilon type (736 aa).

In terms of domain architecture, C2 spans 1-117; the sequence is MVVFNGLLKI…NGSRHFEDWI (117 aa). At Ser62 the chain carries Phosphoserine. A Phorbol-ester/DAG-type 1 zinc finger spans residues 169–220; it reads GHKFMATYLRQPTYCSHCRDFIWGVIGKQGYQCQVCTCVVHKRCHELIITKV. Phosphothreonine is present on Thr228. The residue at position 234 (Ser234) is a Phosphoserine. The Phorbol-ester/DAG-type 2 zinc finger occupies 242–292; that stretch reads PHKFGIHNYKVPTFCDHCGSLLWGLLRQGLQCKVCKMNVHRRCETNVAPNC. Thr309 carries the post-translational modification Phosphothreonine. A disordered region spans residues 310 to 356; the sequence is PDKITNSGQRRKKLIGGAESPQPTSGSSPSEEDRSKSAPTSPCDQEL. Ser316, Ser329, and Ser337 each carry phosphoserine. A Phosphoserine; by GSK3-beta modification is found at Ser346. Thr349 carries the phosphothreonine modification. At Ser350 the chain carries Phosphoserine; by MAPK11 and MAPK14. Ser368 is subject to Phosphoserine; by autocatalysis. A disordered region spans residues 369–397; sequence FDNRGEEHRAASSTDGQLGSPENGEVRQG. Ser388 carries the post-translational modification Phosphoserine. One can recognise a Protein kinase domain in the interval 407–667; the sequence is FNFIKVLGKG…EDAIKQHPFF (261 aa). Residues 413-421 and Lys436 contribute to the ATP site; that span reads LGKGSFGKV. Residue Asp531 is the Proton acceptor of the active site. A Phosphothreonine; by PDPK1 modification is found at Thr565. Residues 668-736 form the AGC-kinase C-terminal domain; it reads KEIDWVLLEQ…FSYFGEDLMP (69 aa). Phosphothreonine is present on Thr702. The residue at position 709 (Thr709) is a Phosphothreonine; by autocatalysis. Ser728 is modified (phosphoserine; by autocatalysis).

It belongs to the protein kinase superfamily. AGC Ser/Thr protein kinase family. PKC subfamily. As to quaternary structure, forms a ternary complex with TRIM63 and RACK1/GN2BL1. Can form a complex with PDLIM5 and N-type calcium channel. Interacts with COPB1. Interacts with DGKQ. Interacts with STAT3. Interacts with YWHAB. Interacts with HSP90AB1; promotes functional activation in a heat shock-dependent manner. Interacts (via phorbol-ester/DAG-type 2 domain) with PRPH and VIM. Interacts with NLRP5/MATER. Post-translationally, phosphorylation on Thr-565 by PDPK1 triggers autophosphorylation on Ser-728. Phosphorylation in the hinge domain at Ser-350 by MAPK11 or MAPK14, Ser-346 by GSK3B and Ser-368 by autophosphorylation is required for interaction with YWHAB. In response to growth factors, phosphorylated at Thr-702 and Ser-728 by the mTORC2 complex, promoting autophosphorylation and activation of PRKCE.

Its subcellular location is the cytoplasm. The protein localises to the cytoskeleton. The protein resides in the cell membrane. It localises to the perinuclear region. It is found in the nucleus. It catalyses the reaction L-seryl-[protein] + ATP = O-phospho-L-seryl-[protein] + ADP + H(+). The catalysed reaction is L-threonyl-[protein] + ATP = O-phospho-L-threonyl-[protein] + ADP + H(+). Novel PKCs (PRKCD, PRKCE, PRKCH and PRKCQ) are calcium-insensitive, but activated by diacylglycerol (DAG) and phosphatidylserine. Three specific sites; Thr-565 (activation loop of the kinase domain), Thr-709 (turn motif) and Ser-728 (hydrophobic region), need to be phosphorylated for its full activation. Calcium-independent, phospholipid- and diacylglycerol (DAG)-dependent serine/threonine-protein kinase that plays essential roles in the regulation of multiple cellular processes linked to cytoskeletal proteins, such as cell adhesion, motility, migration and cell cycle, functions in neuron growth and ion channel regulation, and is involved in immune response, cancer cell invasion and regulation of apoptosis. Mediates cell adhesion to the extracellular matrix via integrin-dependent signaling, by mediating angiotensin-2-induced activation of integrin beta-1 (ITGB1) in cardiac fibroblasts. Phosphorylates MARCKS, which phosphorylates and activates PTK2/FAK, leading to the spread of cardiomyocytes. Involved in the control of the directional transport of ITGB1 in mesenchymal cells by phosphorylating vimentin (VIM), an intermediate filament (IF) protein. In epithelial cells, associates with and phosphorylates keratin-8 (KRT8), which induces targeting of desmoplakin at desmosomes and regulates cell-cell contact. Phosphorylates IQGAP1, which binds to CDC42, mediating epithelial cell-cell detachment prior to migration. During cytokinesis, forms a complex with YWHAB, which is crucial for daughter cell separation, and facilitates abscission by a mechanism which may implicate the regulation of RHOA. In cardiac myocytes, regulates myofilament function and excitation coupling at the Z-lines, where it is indirectly associated with F-actin via interaction with COPB1. During endothelin-induced cardiomyocyte hypertrophy, mediates activation of PTK2/FAK, which is critical for cardiomyocyte survival and regulation of sarcomere length. Plays a role in the pathogenesis of dilated cardiomyopathy via persistent phosphorylation of troponin I (TNNI3). Involved in nerve growth factor (NFG)-induced neurite outgrowth and neuron morphological change independently of its kinase activity, by inhibition of RHOA pathway, activation of CDC42 and cytoskeletal rearrangement. May be involved in presynaptic facilitation by mediating phorbol ester-induced synaptic potentiation. Phosphorylates gamma-aminobutyric acid receptor subunit gamma-2 (GABRG2), which reduces the response of GABA receptors to ethanol and benzodiazepines and may mediate acute tolerance to the intoxicating effects of ethanol. Upon PMA treatment, phosphorylates the capsaicin- and heat-activated cation channel TRPV1, which is required for bradykinin-induced sensitization of the heat response in nociceptive neurons. Is able to form a complex with PDLIM5 and N-type calcium channel, and may enhance channel activities and potentiates fast synaptic transmission by phosphorylating the pore-forming alpha subunit CACNA1B (CaV2.2). Downstream of TLR4, plays an important role in the lipopolysaccharide (LPS)-induced immune response by phosphorylating and activating TICAM2/TRAM, which in turn activates the transcription factor IRF3 and subsequent cytokines production. In differentiating erythroid progenitors, is regulated by EPO and controls the protection against the TNFSF10/TRAIL-mediated apoptosis, via BCL2. May be involved in the regulation of the insulin-induced phosphorylation and activation of AKT1. Phosphorylates NLRP5/MATER and may thereby modulate AKT pathway activation in cumulus cells. Phosphorylates and activates LRRK1, which phosphorylates RAB proteins involved in intracellular trafficking. In Oryctolagus cuniculus (Rabbit), this protein is Protein kinase C epsilon type (PRKCE).